We begin with the raw amino-acid sequence, 272 residues long: Eukaryotic translation initiation factor 3 subunit G (272 aa).

Disordered regions lie at residues 1–28 (MPALDEIKSSWADEVELDSGSLPPPTEI) and 157–188 (APTTAKSGKYVPPSMRDSQKPGMGGNPRGRDD). One can recognise an RRM domain in the interval 190–268 (TAIRISNLSE…LILNVEWSKP (79 aa)).

Belongs to the eIF-3 subunit G family. In terms of assembly, component of the eukaryotic translation initiation factor 3 (eIF-3) complex.

It is found in the cytoplasm. In terms of biological role, RNA-binding component of the eukaryotic translation initiation factor 3 (eIF-3) complex, which is involved in protein synthesis of a specialized repertoire of mRNAs and, together with other initiation factors, stimulates binding of mRNA and methionyl-tRNAi to the 40S ribosome. The eIF-3 complex specifically targets and initiates translation of a subset of mRNAs involved in cell proliferation. This subunit can bind 18S rRNA. This is Eukaryotic translation initiation factor 3 subunit G from Aedes aegypti (Yellowfever mosquito).